We begin with the raw amino-acid sequence, 1181 residues long: WD repeat-containing protein 35 (1181 aa).

WD repeat units lie at residues 4-43, 61-100, 105-143, 147-185, 193-241, and 246-288; these read YLSK…VLKL, LSMN…VWML, WIEE…IVGS, NRIW…IYDN, MKLS…IMRH, and NPVL…IVQF.

Component of the IFT complex A (IFT-A) complex. IFT-A complex is divided into a core subcomplex composed of IFT122:IFT140:WDR19 which is associated with TULP3 and a peripheral subcomplex composed of IFT43:WDR35:TTC21B. Interacts directy with IFT122, ITF43 and TTC21B. Interacts with IFT43. Interacts with CFAP61.

Its subcellular location is the cytoplasm. The protein resides in the cytoskeleton. It localises to the microtubule organizing center. It is found in the centrosome. The protein localises to the cilium axoneme. Its subcellular location is the cilium basal body. Functionally, as a component of the IFT complex A (IFT-A), a complex required for retrograde ciliary transport and entry into cilia of G protein-coupled receptors (GPCRs), it is involved in ciliogenesis and ciliary protein trafficking. May promote CASP3 activation and TNF-stimulated apoptosis. The chain is WD repeat-containing protein 35 from Homo sapiens (Human).